Reading from the N-terminus, the 217-residue chain is Ribonuclease HII (217 aa).

The region spanning 25–215 is the RNase H type-2 domain; it reads KLIAGVDESG…VKHVISDINR (191 aa). Asp31, Glu32, and Asp123 together coordinate a divalent metal cation.

The protein belongs to the RNase HII family. The cofactor is Mn(2+). Requires Mg(2+) as cofactor.

It localises to the cytoplasm. It carries out the reaction Endonucleolytic cleavage to 5'-phosphomonoester.. Functionally, endonuclease that specifically degrades the RNA of RNA-DNA hybrids. The chain is Ribonuclease HII from Blochmanniella pennsylvanica (strain BPEN).